A 469-amino-acid polypeptide reads, in one-letter code: Citrate synthase, mitochondrial (469 aa).

The transit peptide at Met1 to Ser30 directs the protein to the mitochondrion. Residues His304 and His350 contribute to the active site. Arg359 provides a ligand contact to oxaloacetate. Asp405 is a catalytic residue. 2 residues coordinate oxaloacetate: Arg431 and Arg451.

It belongs to the citrate synthase family. Homodimer.

The protein localises to the mitochondrion matrix. The enzyme catalyses oxaloacetate + acetyl-CoA + H2O = citrate + CoA + H(+). It participates in carbohydrate metabolism; tricarboxylic acid cycle; isocitrate from oxaloacetate: step 1/2. Functionally, key enzyme of the Krebs tricarboxylic acid cycle which catalyzes the synthesis of citrate from acetyl coenzyme A and oxaloacetate. This is Citrate synthase, mitochondrial (cs) from Xiphias gladius (Swordfish).